The following is a 186-amino-acid chain: MPFMNFRNFNFMPLLRPLNPVYKGAEHLCRKNIHNQVYNVETGKTIQILQDLVPLVLYRALPDAILDHHVELVIFPNSLNFPRIEGLTIYKFIFKTARLLLSSTYGSSAKRPIDIIHQLHSSMENKNVRYSMKCNWIASPNDEYTWVFHFDIDKKGIIYRHIIDNLERNRSRQCEKISALKPDPIE.

The protein resides in the mitochondrion. Has a role in meiosis. This is Meiotically up-regulated gene 163 protein (mug163) from Schizosaccharomyces pombe (strain 972 / ATCC 24843) (Fission yeast).